Here is a 403-residue protein sequence, read N- to C-terminus: Aurora kinase A (403 aa).

A disordered region spans residues 1-125 (MDRSKENCIS…SKQKNEESKK (125 aa)). Polar residues-rich tracts occupy residues 27–83 (VTQQ…QATS) and 91–101 (PLNNTQKSKQP). 2 positions are modified to phosphoserine: serine 41 and serine 51. The span at 114 to 125 (LASKQKNEESKK) shows a compositional bias: basic and acidic residues. In terms of domain architecture, Protein kinase spans 133–383 (FEIGRPLGKG…LREVLEHPWI (251 aa)). ATP is bound by residues lysine 143, lysine 162, and 211–213 (EYA). The Proton acceptor role is filled by aspartate 256. A Glycyl lysine isopeptide (Lys-Gly) (interchain with G-Cter in SUMO2) cross-link involves residue lysine 258. Residues 260–261 (EN) and aspartate 274 contribute to the ATP site. Residues 280–293 (HAPSSRRTTLCGTL) form an activation segment region. Phosphothreonine is present on residues threonine 287 and threonine 288. A Phosphoserine; by PKA and PAK modification is found at serine 342.

Belongs to the protein kinase superfamily. Ser/Thr protein kinase family. Aurora subfamily. Part of a complex composed of NEDD9, AURKA and CTTN; within the complex NEDD9 acts as a scaffold protein and is required for complex formation. Identified in a complex with AUNIP and NIN. Interacts with FBXL7. Interacts with CPEB1, JTB, TACC1, TPX2, PPP2CA, as well as with the protein phosphatase type 1 (PP1) isoforms PPP1CA, PPP1CB and PPP1CC. Also interacts with its substrates ARHGEF2, BORA, KIF2A, PARD3, and p53/TP53. Interaction with BORA promotes phosphorylation of PLK1. Interacts with CIMAP3. Interacts with GADD45A, competing with its oligomerization. Interacts (via C-terminus) with AUNIP (via C-terminus). Interacts with FRY; this interaction facilitates AURKA-mediated PLK1 phosphorylation. Interacts with SIRT2. Interacts with MYCN; interaction is phospho-independent and triggers AURKA activation; AURKA competes with FBXW7 for binding to unphosphorylated MYCN but not for binding to phosphorylated MYCN. Interacts with HNRNPU. Interacts with AAAS. Interacts with KLHL18 and CUL3. Interacts with FOXP1. Interacts with HDAC6; AURKA-mediated phosphorylation of HDAC6 promotes deacetylation of alpha-tubulin. Post-translationally, activated by phosphorylation at Thr-288; this brings about a change in the conformation of the activation segment. Phosphorylation at Thr-288 varies during the cell cycle and is highest during M phase. Autophosphorylated at Thr-288 upon TPX2 binding. Thr-288 can be phosphorylated by several kinases, including PAK and PKA. Protein phosphatase type 1 (PP1) binds AURKA and inhibits its activity by dephosphorylating Thr-288 during mitosis. Phosphorylation at Ser-342 decreases the kinase activity. PPP2CA controls degradation by dephosphorylating Ser-51 at the end of mitosis. In terms of processing, ubiquitinated by the E3 ubiquitin-protein ligase complex SCF(FBXL7) during mitosis, leading to its degradation by the proteasome. Ubiquitinated by CHFR, leading to its degradation by the proteasome. Ubiquitinated by the anaphase-promoting complex (APC), leading to its degradation by the proteasome. Ubiquitinated by the CUL3-KLHL18 ligase leading to its activation at the centrosome which is required for initiating mitotic entry. Ubiquitination mediated by CUL3-KLHL18 ligase does not lead to its degradation by the proteasome. Highly expressed in testis and weakly in skeletal muscle, thymus and spleen. Also highly expressed in colon, ovarian, prostate, neuroblastoma, breast and cervical cancer cell lines.

Its subcellular location is the cytoplasm. The protein resides in the cytoskeleton. It localises to the microtubule organizing center. The protein localises to the centrosome. It is found in the spindle pole. Its subcellular location is the centriole. The protein resides in the cell projection. It localises to the neuron projection. The protein localises to the cilium. It is found in the cilium basal body. Its subcellular location is the basolateral cell membrane. The catalysed reaction is L-seryl-[protein] + ATP = O-phospho-L-seryl-[protein] + ADP + H(+). The enzyme catalyses L-threonyl-[protein] + ATP = O-phospho-L-threonyl-[protein] + ADP + H(+). Activation of CDK1, appears to be an upstream event of AURKA activation. Phosphatase inhibitor-2 (PPP1R2) and TPX2 act also as activators. Inactivated by the G2 checkpoint. Inhibited by GADD45A and p53/TP53, and through dephosphorylation by protein phosphatase type 1 (PP1). MLN8054 is also a potent and selective inhibitor. Activated during the early phase of cilia disassembly in the presence of CIMAP3. Inhibited by the small molecule inhibitor VX-680. Mitotic serine/threonine kinase that contributes to the regulation of cell cycle progression. Associates with the centrosome and the spindle microtubules during mitosis and plays a critical role in various mitotic events including the establishment of mitotic spindle, centrosome duplication, centrosome separation as well as maturation, chromosomal alignment, spindle assembly checkpoint, and cytokinesis. Required for normal spindle positioning during mitosis and for the localization of NUMA1 and DCTN1 to the cell cortex during metaphase. Required for initial activation of CDK1 at centrosomes. Phosphorylates numerous target proteins, including ARHGEF2, BORA, BRCA1, CDC25B, DLGP5, HDAC6, KIF2A, LATS2, NDEL1, PARD3, PPP1R2, PLK1, RASSF1, TACC3, p53/TP53 and TPX2. Phosphorylates MCRS1 which is required for MCRS1-mediated kinetochore fiber assembly and mitotic progression. Regulates KIF2A tubulin depolymerase activity. Important for microtubule formation and/or stabilization. Required for normal axon formation. Plays a role in microtubule remodeling during neurite extension. Also acts as a key regulatory component of the p53/TP53 pathway, and particularly the checkpoint-response pathways critical for oncogenic transformation of cells, by phosphorylating and destabilizing p53/TP53. Phosphorylates its own inhibitors, the protein phosphatase type 1 (PP1) isoforms, to inhibit their activity. Inhibits cilia outgrowth. Required for cilia disassembly via phosphorylation of HDAC6 and subsequent deacetylation of alpha-tubulin. Regulates protein levels of the anti-apoptosis protein BIRC5 by suppressing the expression of the SCF(FBXL7) E3 ubiquitin-protein ligase substrate adapter FBXL7 through the phosphorylation of the transcription factor FOXP1. This Homo sapiens (Human) protein is Aurora kinase A.